A 367-amino-acid chain; its full sequence is Outer membrane porin C (367 aa).

The signal sequence occupies residues 1 to 21 (MKVKVLSLLVPALLVAGAANA). At 22–33 (AEVYNKDGNKLD) the chain is on the periplasmic side. A beta stranded transmembrane segment spans residues 34 to 42 (LYGKVDGLH). At 43–53 (YFSDNKDVDGD) the chain is on the extracellular side. Residues 54-63 (QTYMRLGFKG) traverse the membrane as a beta stranded segment. Residues 64–73 (ETQVTDQLTG) lie on the Periplasmic side of the membrane. Residues 74–84 (YGQWEYQIQGN) traverse the membrane as a beta stranded segment. Over 85-91 (SAENENN) the chain is Extracellular. A beta stranded transmembrane segment spans residues 92–101 (SWTRVAFAGL). Residues 102-106 (KFQDV) lie on the Periplasmic side of the membrane. The beta stranded transmembrane segment at 107–115 (GSFDYGRNY) threads the bilayer. The tract at residues 116–133 (GVVYDVTSWTDVLPEFGG) is loop L3; may constrict the pore. Over 116–141 (GVVYDVTSWTDVLPEFGGDTYGSDNF) the chain is Extracellular. A beta stranded membrane pass occupies residues 142-154 (MQQRGNGFATYRN). At 155–163 (TDFFGLVDG) the chain is on the periplasmic side. Residues 164–171 (LNFAVQYQ) form a beta stranded membrane-spanning segment. Residues 172–200 (GKNGNPSGEGFTSGVTNNGRDALRQNGDG) are Extracellular-facing. A beta stranded membrane pass occupies residues 201–207 (VGGSITY). Residues 208–211 (DYEG) lie on the Periplasmic side of the membrane. The chain crosses the membrane as a beta stranded span at residues 212–219 (FGIGGAIS). Topologically, residues 220–241 (SSKRTDAQNTAAYIGNGDRAET) are extracellular. A beta stranded membrane pass occupies residues 242–248 (YTGGLKY). Residues 249–252 (DANN) are Periplasmic-facing. Residues 253–260 (IYLAAQYT) form a beta stranded membrane-spanning segment. Residues 261–269 (QTYNATRVG) lie on the Extracellular side of the membrane. The beta stranded transmembrane segment at 270 to 286 (SLGWANKAQNFEAVAQY) threads the bilayer. Over 287–291 (QFDFG) the chain is Periplasmic. Residues 292-299 (LRPSLAYL) traverse the membrane as a beta stranded segment. Residues 300-318 (QSKGKNLGRGYDDEDILKY) are Extracellular-facing. Residues 319-326 (VDVGATYY) form a beta stranded membrane-spanning segment. Residues 327–330 (FNKN) lie on the Periplasmic side of the membrane. Residues 331-338 (MSTYVDYK) form a beta stranded membrane-spanning segment. The Extracellular segment spans residues 339–358 (INLLDDNQFTRDAGINTDNI). Mg(2+)-binding residues include N340, L342, and T355. Residues 359–366 (VALGLVYQ) traverse the membrane as a beta stranded segment. A topological domain (periplasmic) is located at residue F367.

It belongs to the Gram-negative porin family. In terms of assembly, homotrimer. Forms mixed heterotrimers with OmpF and with PhoE; other mixed heterotrimers are also probable.

The protein resides in the cell outer membrane. Its function is as follows. Forms pores that allow passive diffusion of small molecules across the outer membrane. In terms of biological role, (Microbial infection) Supports colicin E5 entry in the absence of its major receptor OmpF. (Microbial infection) A mixed OmpC-OmpF heterotrimer is the outer membrane receptor for toxin CdiA-EC536; polymorphisms in extracellular loops 4 and 5 of OmpC confer susceptibility to CdiA-EC536-mediated toxicity. The protein is Outer membrane porin C (ompC) of Escherichia coli (strain K12).